The chain runs to 66 residues: Large ribosomal subunit protein bL33c (66 aa).

This sequence belongs to the bacterial ribosomal protein bL33 family.

The protein resides in the plastid. It is found in the chloroplast. The protein is Large ribosomal subunit protein bL33c of Nicotiana sylvestris (Wood tobacco).